Reading from the N-terminus, the 324-residue chain is Probable peptidylglycine alpha-hydroxylating monooxygenase 1 (324 aa).

Residues 1-22 form the signal peptide; sequence MPRFYLLSSCALLAFATSFCNA. Disulfide bonds link Cys-41–Cys-85 and Cys-73–Cys-101. Cu cation contacts are provided by His-66 and His-67. His-142 serves as a coordination point for Cu cation. N-linked (GlcNAc...) asparagine glycosylation occurs at Asn-182. Residues His-207, His-209, and Met-284 each coordinate Cu cation. Cys-264 and Cys-285 are joined by a disulfide.

Belongs to the copper type II ascorbate-dependent monooxygenase family. Cu(2+) serves as cofactor.

It localises to the secreted. The catalysed reaction is a [peptide]-C-terminal glycine + 2 L-ascorbate + O2 = a [peptide]-C-terminal (2S)-2-hydroxyglycine + 2 monodehydro-L-ascorbate radical + H2O. Functionally, monooxygenase that catalyzes an essential reaction in C-terminal alpha-amidation of peptides. Produces an unstable peptidyl(2-hydroxyglycine) intermediate. C-terminal amidation of peptides such as neuropeptides is essential for full biological activity. This Caenorhabditis elegans protein is Probable peptidylglycine alpha-hydroxylating monooxygenase 1.